Consider the following 92-residue polypeptide: Small ribosomal subunit protein uS19 (92 aa).

It belongs to the universal ribosomal protein uS19 family.

In terms of biological role, protein S19 forms a complex with S13 that binds strongly to the 16S ribosomal RNA. In Cyanothece sp. (strain PCC 7425 / ATCC 29141), this protein is Small ribosomal subunit protein uS19.